The primary structure comprises 597 residues: tRNA uridine 5-carboxymethylaminomethyl modification enzyme MnmG (597 aa).

Glycine 10–glycine 15 provides a ligand contact to FAD. Glycine 267 to phenylalanine 281 is an NAD(+) binding site.

It belongs to the MnmG family. In terms of assembly, homodimer. Heterotetramer of two MnmE and two MnmG subunits. FAD is required as a cofactor.

Its subcellular location is the cytoplasm. NAD-binding protein involved in the addition of a carboxymethylaminomethyl (cmnm) group at the wobble position (U34) of certain tRNAs, forming tRNA-cmnm(5)s(2)U34. This Thermus thermophilus (strain ATCC BAA-163 / DSM 7039 / HB27) protein is tRNA uridine 5-carboxymethylaminomethyl modification enzyme MnmG.